The chain runs to 651 residues: ATP synthase F(1) complex catalytic subunit beta, mitochondrial (651 aa).

Residues 1–30 (MFVARRLSKNITQISKTAVKTSVRAVPVRG) constitute a mitochondrion transit peptide. The ADP site is built by Gly259, Val260, Gly261, Lys262, Thr263, and Val264. Gly259 contacts ATP. Phosphate contacts are provided by Gly259, Val260, Gly261, Lys262, and Thr263. ATP is bound by residues Gly261, Lys262, Thr263, and Val264. Thr263 lines the Mg(2+) pocket. Residue Glu288 coordinates Mg(2+). Arg289 serves as a coordination point for ATP.

Belongs to the ATPase alpha/beta chains family. As to quaternary structure, homotrimer. Component of the ATP synthase complex composed at least of ATP5F1A/subunit alpha, ATP5F1B/subunit beta, ATP5MC1/subunit c (homooctomer), MT-ATP6/subunit a, MT-ATP8/subunit 8, ATP5ME/subunit e, ATP5MF/subunit f, ATP5MG/subunit g, ATP5MK/subunit k, ATP5MJ/subunit j, ATP5F1C/subunit gamma, ATP5F1D/subunit delta, ATP5F1E/subunit epsilon, ATP5PF/subunit F6, ATP5PB/subunit b, ATP5PD/subunit d, ATP5PO/subunit OSCP. ATP synthase complex consists of a soluble F(1) head domain (subunits alpha(3) and beta(3)) - the catalytic core - and a membrane F(0) domain - the membrane proton channel (subunits c, a, 8, e, f, g, k and j). These two domains are linked by a central stalk (subunits gamma, delta, and epsilon) rotating inside the F1 region and a stationary peripheral stalk (subunits F6, b, d, and OSCP).

The protein localises to the mitochondrion inner membrane. It carries out the reaction ATP + H2O + 4 H(+)(in) = ADP + phosphate + 5 H(+)(out). Its function is as follows. Catalytic subunit beta, of the mitochondrial membrane ATP synthase complex (F(1)F(0) ATP synthase or Complex V) that produces ATP from ADP in the presence of a proton gradient across the membrane which is generated by electron transport complexes of the respiratory chain. ATP synthase complex consist of a soluble F(1) head domain - the catalytic core - and a membrane F(1) domain - the membrane proton channel. These two domains are linked by a central stalk rotating inside the F(1) region and a stationary peripheral stalk. During catalysis, ATP synthesis in the catalytic domain of F(1) is coupled via a rotary mechanism of the central stalk subunits to proton translocation. In vivo, can only synthesize ATP although its ATP hydrolase activity can be activated artificially in vitro. With the subunit alpha (ATP5F1A), forms the catalytic core in the F(1) domain. In Dictyostelium discoideum (Social amoeba), this protein is ATP synthase F(1) complex catalytic subunit beta, mitochondrial.